Consider the following 374-residue polypeptide: Pre-B-cell leukemia transcription factor 4 (374 aa).

Positions 14-209 (PRRLDTSDVL…VMTLRSRLLD (196 aa)) constitute a PBC domain. The PBC-A stretch occupies residues 21-100 (DVLQQIMAIT…EGVCRPEKRG (80 aa)). The PBC-B stretch occupies residues 103–209 (GAVARAGTAT…VMTLRSRLLD (107 aa)). Residues 210–272 (ARRKRRNFSK…NKRIRYKKNM (63 aa)) constitute a DNA-binding region (homeobox; TALE-type). Residues 333–374 (QPPPGGGCLQSQAQGSWQGATPQPATASPAGDPGSINSSTSN) are disordered. Residues 341-358 (LQSQAQGSWQGATPQPAT) are compositionally biased toward polar residues.

The protein belongs to the TALE/PBX homeobox family.

It localises to the nucleus. This chain is Pre-B-cell leukemia transcription factor 4 (PBX4), found in Homo sapiens (Human).